Reading from the N-terminus, the 309-residue chain is Olfactory receptor 2G3 (309 aa).

Topologically, residues 1-25 (MGLGNESSLMDFILLGFSDHPRLEA) are extracellular. Asn5 is a glycosylation site (N-linked (GlcNAc...) asparagine). A helical transmembrane segment spans residues 26–49 (VLFVFVLFFYLLTLVGNFTIIIIS). The Cytoplasmic portion of the chain corresponds to 50-57 (YLDPPLHT). Residues 58–79 (PMYFFLSNLSLLDICFTTSLAP) form a helical membrane-spanning segment. Topologically, residues 80–100 (QTLVNLQRPKKTITYGGCVAQ) are extracellular. Cys97 and Cys189 form a disulfide bridge. The chain crosses the membrane as a helical span at residues 101–120 (LYISLALGSTECILLADMAL). The Cytoplasmic segment spans residues 121 to 139 (DRYIAVCKPLHYVVIMNPR). Residues 140–158 (LCQQLASISWLSGLASSLI) form a helical membrane-spanning segment. The Extracellular portion of the chain corresponds to 159-195 (HATFTLQLPLCGNHRLDHFICEVPALLKLACVDTTVN). A helical membrane pass occupies residues 196-219 (ELVLFVVSVLFVVIPPALISISYG). Over 220-236 (FITQAVLRIKSVEARHK) the chain is Cytoplasmic. The chain crosses the membrane as a helical span at residues 237–259 (AFSTCSSHLTVVIIFYGTIIYVY). At 260–272 (LQPSDSYAQDQGK) the chain is on the extracellular side. Residues 273 to 292 (FISLFYTMVTPTLNPIIYTL) form a helical membrane-spanning segment. The Cytoplasmic segment spans residues 293 to 309 (RNKDMKEALRKLLSGKL).

It belongs to the G-protein coupled receptor 1 family.

It localises to the cell membrane. In terms of biological role, odorant receptor. The chain is Olfactory receptor 2G3 (OR2G3) from Homo sapiens (Human).